Reading from the N-terminus, the 223-residue chain is Transmembrane protein 126 (223 aa).

Topologically, residues 1–39 (MALSRAKPDELPRDAVVITEDQALKYQWKIITSWDKIGE) are mitochondrial matrix. The helical transmembrane segment at 40–62 (VWSLRYTPGILSALAAGTGAYIN) threads the bilayer. At 63 to 78 (NHYRTKLRLGGHGRLS) the chain is on the mitochondrial intermembrane side. The helical transmembrane segment at 79-99 (TYLPIVAVPAIFTMLAHKFFI) threads the bilayer. Residues 100–123 (QRPILLNPLGECPVCIQMRSAAFQ) are Mitochondrial matrix-facing. Residues 124–144 (TSLGIVYPTILAPFAAFLFAT) traverse the membrane as a helical segment. Over 145 to 171 (RCYTYRIPSITENPREVFLLWRKFTRP) the chain is Mitochondrial intermembrane. Residues 172–192 (IVPALGTLIGLQALLTMFLTG) form a helical membrane-spanning segment. Over 193–223 (QEDKQNFKLMLRMREIEHQVEEEHLPQRMDF) the chain is Mitochondrial matrix.

It belongs to the TMEM126 family. In terms of assembly, associates with mitochondrial complex I assembly intermediates during its biogenesis.

It is found in the mitochondrion membrane. Its function is as follows. As part of the MCIA complex, involved in the assembly of the mitochondrial complex I. In Drosophila melanogaster (Fruit fly), this protein is Transmembrane protein 126.